Here is a 262-residue protein sequence, read N- to C-terminus: 3-methyl-2-oxobutanoate hydroxymethyltransferase (262 aa).

Positions 44 and 83 each coordinate Mg(2+). 3-methyl-2-oxobutanoate contacts are provided by residues 44 to 45 (DS), aspartate 83, and lysine 112. Residue glutamate 114 participates in Mg(2+) binding. Glutamate 181 serves as the catalytic Proton acceptor.

Belongs to the PanB family. Homodecamer; pentamer of dimers. It depends on Mg(2+) as a cofactor.

The protein localises to the cytoplasm. The enzyme catalyses 3-methyl-2-oxobutanoate + (6R)-5,10-methylene-5,6,7,8-tetrahydrofolate + H2O = 2-dehydropantoate + (6S)-5,6,7,8-tetrahydrofolate. The protein operates within cofactor biosynthesis; (R)-pantothenate biosynthesis; (R)-pantoate from 3-methyl-2-oxobutanoate: step 1/2. Functionally, catalyzes the reversible reaction in which hydroxymethyl group from 5,10-methylenetetrahydrofolate is transferred onto alpha-ketoisovalerate to form ketopantoate. The chain is 3-methyl-2-oxobutanoate hydroxymethyltransferase from Thiobacillus denitrificans (strain ATCC 25259 / T1).